Consider the following 228-residue polypeptide: uncharacterized protein (228 aa).

Positions 194–228 are disordered; it reads SRRADEHPAPSTEPHAAAVAPEPDFMAEPIPALEE.

This is an uncharacterized protein from Treponema pallidum (strain Nichols).